The primary structure comprises 205 residues: dTTP/UTP pyrophosphatase (205 aa).

Asp-81 (proton acceptor) is an active-site residue.

Belongs to the Maf family. YhdE subfamily. A divalent metal cation is required as a cofactor.

The protein localises to the cytoplasm. It catalyses the reaction dTTP + H2O = dTMP + diphosphate + H(+). The catalysed reaction is UTP + H2O = UMP + diphosphate + H(+). Functionally, nucleoside triphosphate pyrophosphatase that hydrolyzes dTTP and UTP. May have a dual role in cell division arrest and in preventing the incorporation of modified nucleotides into cellular nucleic acids. The sequence is that of dTTP/UTP pyrophosphatase from Agathobacter rectalis (strain ATCC 33656 / DSM 3377 / JCM 17463 / KCTC 5835 / VPI 0990) (Eubacterium rectale).